The following is a 129-amino-acid chain: Serum amyloid A protein (129 aa).

The first 18 residues, 1 to 18 (MKLFPGLLFCSLVLGVSG), serve as a signal peptide directing secretion. The residue at position 19 (Q19) is a Pyrrolidone carboxylic acid. Residues 92–129 (GDSGHGAEDSKADQAANEWGRSGKDPNHFRPAGLPDKY) are disordered. The propeptide at 112-129 (RSGKDPNHFRPAGLPDKY) is often cleaved during amyloidogenesis.

Belongs to the SAA family. Post-translationally, this protein is the precursor of amyloid protein A, which is formed by the removal of residues from the C-terminal end. Expressed by the liver; secreted in plasma.

The protein localises to the secreted. Major acute phase reactant. Apolipoprotein of the HDL complex. This is Serum amyloid A protein (SAA1) from Canis lupus familiaris (Dog).